A 259-amino-acid polypeptide reads, in one-letter code: O-antigen export system permease protein RfbA (259 aa).

Helical transmembrane passes span 33–53 (LGYLWSVANPLLFAMIYYFIF), 73–95 (FPWQWFASSATNSLFSFIANAQI), 111–131 (VMMEGLHFLCTIPVIVVFLFV), 142–162 (WGIPLIAIGQVIFTFGVSIIF), 176–196 (VSLGIMLMFYCTPILYASDMI), and 228–248 (EYISILYFTGIILTVVGLSIF). Residues 33-251 (LGYLWSVANP…VVGLSIFNKL (219 aa)) enclose the ABC transmembrane type-2 domain.

Belongs to the ABC-2 integral membrane protein family.

The protein resides in the cell inner membrane. Its function is as follows. May form an ATP-driven O-antigen export apparatus, in association with RfbB. The protein is O-antigen export system permease protein RfbA (rfbA) of Klebsiella pneumoniae.